The primary structure comprises 245 residues: 5'-nucleotidase SurE (245 aa).

Positions 8, 9, 39, and 91 each coordinate a divalent metal cation.

Belongs to the SurE nucleotidase family. A divalent metal cation serves as cofactor.

The protein resides in the cytoplasm. It carries out the reaction a ribonucleoside 5'-phosphate + H2O = a ribonucleoside + phosphate. Functionally, nucleotidase that shows phosphatase activity on nucleoside 5'-monophosphates. This chain is 5'-nucleotidase SurE, found in Herminiimonas arsenicoxydans.